Here is a 212-residue protein sequence, read N- to C-terminus: Proteasome subunit beta (212 aa).

Positions 1–11 (MSQEHQDVKTG) are cleaved as a propeptide — removed in mature form; by autocatalysis. The active-site Nucleophile is threonine 12.

This sequence belongs to the peptidase T1B family. In terms of assembly, the 20S proteasome core is composed of 14 alpha and 14 beta subunits that assemble into four stacked heptameric rings, resulting in a barrel-shaped structure. The two inner rings, each composed of seven catalytic beta subunits, are sandwiched by two outer rings, each composed of seven alpha subunits. The catalytic chamber with the active sites is on the inside of the barrel. Has a gated structure, the ends of the cylinder being occluded by the N-termini of the alpha-subunits. Is capped at one or both ends by the proteasome regulatory ATPase, PAN.

Its subcellular location is the cytoplasm. It catalyses the reaction Cleavage of peptide bonds with very broad specificity.. Its activity is regulated as follows. The formation of the proteasomal ATPase PAN-20S proteasome complex, via the docking of the C-termini of PAN into the intersubunit pockets in the alpha-rings, triggers opening of the gate for substrate entry. Interconversion between the open-gate and close-gate conformations leads to a dynamic regulation of the 20S proteasome proteolysis activity. Functionally, component of the proteasome core, a large protease complex with broad specificity involved in protein degradation. This is Proteasome subunit beta from Methanocorpusculum labreanum (strain ATCC 43576 / DSM 4855 / Z).